The following is a 113-amino-acid chain: Ig heavy chain V-III region ABE-47N (113 aa).

Residues 1–113 enclose the Ig-like domain; sequence EVKLEESGGG…YWGQGTLVTV (113 aa). The cysteines at positions 22 and 98 are disulfide-linked.

The sequence is that of Ig heavy chain V-III region ABE-47N from Mus musculus (Mouse).